The following is a 520-amino-acid chain: Bifunctional purine biosynthesis protein PurH (520 aa).

One can recognise an MGS-like domain in the interval 1-150 (MSDDRKAIKR…KNHPSVAVVV (150 aa)).

This sequence belongs to the PurH family.

It carries out the reaction (6R)-10-formyltetrahydrofolate + 5-amino-1-(5-phospho-beta-D-ribosyl)imidazole-4-carboxamide = 5-formamido-1-(5-phospho-D-ribosyl)imidazole-4-carboxamide + (6S)-5,6,7,8-tetrahydrofolate. The enzyme catalyses IMP + H2O = 5-formamido-1-(5-phospho-D-ribosyl)imidazole-4-carboxamide. The protein operates within purine metabolism; IMP biosynthesis via de novo pathway; 5-formamido-1-(5-phospho-D-ribosyl)imidazole-4-carboxamide from 5-amino-1-(5-phospho-D-ribosyl)imidazole-4-carboxamide (10-formyl THF route): step 1/1. Its pathway is purine metabolism; IMP biosynthesis via de novo pathway; IMP from 5-formamido-1-(5-phospho-D-ribosyl)imidazole-4-carboxamide: step 1/1. The protein is Bifunctional purine biosynthesis protein PurH of Corynebacterium glutamicum (strain R).